We begin with the raw amino-acid sequence, 194 residues long: Molybdenum cofactor guanylyltransferase (194 aa).

Residues L12–G14, K25, N53, D70, and D100 each bind GTP. Mg(2+) is bound at residue D100.

The protein belongs to the MobA family. As to quaternary structure, monomer. It depends on Mg(2+) as a cofactor.

The protein localises to the cytoplasm. It catalyses the reaction Mo-molybdopterin + GTP + H(+) = Mo-molybdopterin guanine dinucleotide + diphosphate. In terms of biological role, transfers a GMP moiety from GTP to Mo-molybdopterin (Mo-MPT) cofactor (Moco or molybdenum cofactor) to form Mo-molybdopterin guanine dinucleotide (Mo-MGD) cofactor. This chain is Molybdenum cofactor guanylyltransferase, found in Vibrio atlanticus (strain LGP32) (Vibrio splendidus (strain Mel32)).